The primary structure comprises 225 residues: Urease accessory protein UreG 2 (225 aa).

GTP is bound at residue 31–38 (GPVGSGKT).

This sequence belongs to the SIMIBI class G3E GTPase family. UreG subfamily. Homodimer. UreD, UreF and UreG form a complex that acts as a GTP-hydrolysis-dependent molecular chaperone, activating the urease apoprotein by helping to assemble the nickel containing metallocenter of UreC. The UreE protein probably delivers the nickel.

It localises to the cytoplasm. Facilitates the functional incorporation of the urease nickel metallocenter. This process requires GTP hydrolysis, probably effectuated by UreG. This Streptomyces griseus subsp. griseus (strain JCM 4626 / CBS 651.72 / NBRC 13350 / KCC S-0626 / ISP 5235) protein is Urease accessory protein UreG 2.